Consider the following 514-residue polypeptide: Membrane-bound lytic murein transglycosylase F (514 aa).

The first 30 residues, 1-30, serve as a signal peptide directing secretion; it reads MKKLKINYLFIGILTLLLAAALWPSIPWFG. The segment at 31–269 is non-LT domain; sequence KTENHIAAIQ…RIEEKYLGHG (239 aa). Residues 270-514 form an LT domain region; that stretch reads DDFDYVDTRS…LFTPQKKEEK (245 aa). Residue Glu-314 is part of the active site.

It in the N-terminal section; belongs to the bacterial solute-binding protein 3 family. In the C-terminal section; belongs to the transglycosylase Slt family.

It is found in the cell outer membrane. It catalyses the reaction Exolytic cleavage of the (1-&gt;4)-beta-glycosidic linkage between N-acetylmuramic acid (MurNAc) and N-acetylglucosamine (GlcNAc) residues in peptidoglycan, from either the reducing or the non-reducing ends of the peptidoglycan chains, with concomitant formation of a 1,6-anhydrobond in the MurNAc residue.. Murein-degrading enzyme that degrades murein glycan strands and insoluble, high-molecular weight murein sacculi, with the concomitant formation of a 1,6-anhydromuramoyl product. Lytic transglycosylases (LTs) play an integral role in the metabolism of the peptidoglycan (PG) sacculus. Their lytic action creates space within the PG sacculus to allow for its expansion as well as for the insertion of various structures such as secretion systems and flagella. The sequence is that of Membrane-bound lytic murein transglycosylase F from Salmonella paratyphi A (strain ATCC 9150 / SARB42).